A 461-amino-acid polypeptide reads, in one-letter code: Tubulin gamma chain (461 aa).

142–148 (AGGTGSG) is a binding site for GTP.

The protein belongs to the tubulin family.

It localises to the cytoplasm. Its subcellular location is the cytoskeleton. The protein localises to the microtubule organizing center. The protein resides in the spindle pole body. In terms of biological role, tubulin is the major constituent of microtubules. The gamma chain is found at microtubule organizing centers (MTOC) such as the spindle poles or the centrosome, suggesting that it is involved in the minus-end nucleation of microtubule assembly. In Neurospora crassa (strain ATCC 24698 / 74-OR23-1A / CBS 708.71 / DSM 1257 / FGSC 987), this protein is Tubulin gamma chain (tbg).